The primary structure comprises 393 residues: Dual-specificity RNA methyltransferase RlmN (393 aa).

Glu114 serves as the catalytic Proton acceptor. The Radical SAM core domain maps to 120 to 359; that stretch reads EDDRATLCVS…VIVRKTRGDD (240 aa). The cysteines at positions 127 and 364 are disulfide-linked. Positions 134, 138, and 141 each coordinate [4Fe-4S] cluster. S-adenosyl-L-methionine-binding positions include 188–189, Ser220, 242–244, and Asn321; these read GE and SLH. Cys364 functions as the S-methylcysteine intermediate in the catalytic mechanism.

The protein belongs to the radical SAM superfamily. RlmN family. Requires [4Fe-4S] cluster as cofactor.

It is found in the cytoplasm. The catalysed reaction is adenosine(2503) in 23S rRNA + 2 reduced [2Fe-2S]-[ferredoxin] + 2 S-adenosyl-L-methionine = 2-methyladenosine(2503) in 23S rRNA + 5'-deoxyadenosine + L-methionine + 2 oxidized [2Fe-2S]-[ferredoxin] + S-adenosyl-L-homocysteine. It carries out the reaction adenosine(37) in tRNA + 2 reduced [2Fe-2S]-[ferredoxin] + 2 S-adenosyl-L-methionine = 2-methyladenosine(37) in tRNA + 5'-deoxyadenosine + L-methionine + 2 oxidized [2Fe-2S]-[ferredoxin] + S-adenosyl-L-homocysteine. Specifically methylates position 2 of adenine 2503 in 23S rRNA and position 2 of adenine 37 in tRNAs. m2A2503 modification seems to play a crucial role in the proofreading step occurring at the peptidyl transferase center and thus would serve to optimize ribosomal fidelity. The sequence is that of Dual-specificity RNA methyltransferase RlmN from Actinobacillus pleuropneumoniae serotype 3 (strain JL03).